A 172-amino-acid chain; its full sequence is Capsid protein (172 aa).

Belongs to the nanoviridae capsid protein family.

The protein resides in the virion. The sequence is that of Capsid protein (DNA-S) from Astragalus sinicus (Chinese milk vetch).